We begin with the raw amino-acid sequence, 994 residues long: Sarcoplasmic/endoplasmic reticulum calcium ATPase 1 (994 aa).

The Cytoplasmic segment spans residues 1 to 48 (MEAAHSKSTEECLSYFGVSETTGLTPDQVKRHLEKYGPNELPAEEGKS). A helical transmembrane segment spans residues 49 to 69 (LWELVVEQFEDLLVRILLLAA). Over 70–89 (CISFVLAWFEEGEETVTAFV) the chain is Lumenal. Residues 90–110 (EPFVILLILIANAIVGVWQER) traverse the membrane as a helical segment. Over 111 to 253 (NAENAIEALK…QDKTPLQQKL (143 aa)) the chain is Cytoplasmic. The chain crosses the membrane as a helical span at residues 254–273 (DEFGEQLSKVISLICVAVWL). Residues 274 to 295 (INIGHFNDPVHGGSWFRGAIYY) lie on the Lumenal side of the membrane. Residues 296–313 (FKIAVALAVAAIPEGLPA) form a helical membrane-spanning segment. Ca(2+) is bound by residues Val-304, Ala-305, Ile-307, and Glu-309. Topologically, residues 314–757 (VITTCLALGT…EEGRAIYNNM (444 aa)) are cytoplasmic. Asp-351 functions as the 4-aspartylphosphate intermediate in the catalytic mechanism. Mg(2+) is bound by residues Asp-351 and Thr-353. Thr-353 is a binding site for ATP. Residue Thr-441 is modified to Phosphothreonine. ATP contacts are provided by Glu-442, Arg-489, Lys-515, and Arg-560. A Phosphothreonine modification is found at Thr-569. Ser-581 is subject to Phosphoserine. ATP is bound by residues Thr-625, Gly-626, and Asp-627. Ser-643 is subject to Phosphoserine. Positions 678 and 684 each coordinate ATP. Asp-703 contributes to the Mg(2+) binding site. Asn-706 contributes to the ATP binding site. Residues 758 to 777 (KQFIRYLISSNVGEVVCIFL) form a helical membrane-spanning segment. Residues Asn-768 and Glu-771 each coordinate Ca(2+). Topologically, residues 778–787 (TAALGLPEAL) are lumenal. Residues 788–808 (IPVQLLWVNLVTDGLPATALG) form a helical membrane-spanning segment. The tract at residues 788–808 (IPVQLLWVNLVTDGLPATALG) is interaction with PLN. Positions 796, 799, and 800 each coordinate Ca(2+). The Cytoplasmic segment spans residues 809-828 (FNPPDLDIMDRPPRSPKEPL). The chain crosses the membrane as a helical span at residues 829–851 (ISGWLFFRYMAIGGYVGAATVGA). Over 852 to 897 (AAWWFLYAEDGPHVSYHQLTHFMQCTEHNPEFDGLDCEVFEAPEPM) the chain is Lumenal. Cysteines 876 and 888 form a disulfide. Residues 898 to 917 (TMALSVLVTIEMCNALNSLS) traverse the membrane as a helical segment. Glu-908 provides a ligand contact to Ca(2+). Residues 918 to 930 (ENQSLLRMPPWVN) lie on the Cytoplasmic side of the membrane. The helical transmembrane segment at 931-949 (IWLLGSICLSMSLHFLILY) threads the bilayer. The interval 932–943 (WLLGSICLSMSL) is interaction with PLN. Over 950–964 (VDPLPMIFKLRALDF) the chain is Lumenal. Residues 965-985 (TQWLMVLKISLPVIGLDELLK) form a helical membrane-spanning segment. The Cytoplasmic portion of the chain corresponds to 986–994 (FIARNYLEG).

The protein belongs to the cation transport ATPase (P-type) (TC 3.A.3) family. Type IIA subfamily. As to quaternary structure, interacts with sarcolipin (SLN). Interacts with phospholamban (PLN). Interacts with myoregulin (MRLN). Interacts with DWORF. Interacts with VMP1. The cofactor is Mg(2+).

It is found in the endoplasmic reticulum membrane. It localises to the sarcoplasmic reticulum membrane. It catalyses the reaction Ca(2+)(in) + ATP + H2O = Ca(2+)(out) + ADP + phosphate + H(+). Inhibited by sarcolipin (SLN) and myoregulin (MRLN). Has also been shown to be reversibly inhibited by phospholamban (PLN) at low calcium concentrations in vitro. Dephosphorylated PLN decreases the apparent affinity of the ATPase for calcium in vitro and this inhibition is regulated by the phosphorylation of PLN. Enhanced by DWORF; DWORF increases activity by displacing sarcolipin (SLN), phospholamban (PLN) and myoregulin (MRLN). Key regulator of striated muscle performance by acting as the major Ca(2+) ATPase responsible for the reuptake of cytosolic Ca(2+) into the sarcoplasmic reticulum. Catalyzes the hydrolysis of ATP coupled with the translocation of calcium from the cytosol to the sarcoplasmic reticulum lumen. Contributes to calcium sequestration involved in muscular excitation/contraction. This chain is Sarcoplasmic/endoplasmic reticulum calcium ATPase 1 (Atp2a1), found in Mus musculus (Mouse).